The chain runs to 402 residues: Imidazolonepropionase (402 aa).

2 residues coordinate Fe(3+): histidine 66 and histidine 68. Residues histidine 66 and histidine 68 each contribute to the Zn(2+) site. Arginine 75, tyrosine 138, and histidine 171 together coordinate 4-imidazolone-5-propanoate. Residue tyrosine 138 participates in N-formimidoyl-L-glutamate binding. Histidine 236 is a binding site for Fe(3+). Position 236 (histidine 236) interacts with Zn(2+). Glutamine 239 contacts 4-imidazolone-5-propanoate. Aspartate 311 serves as a coordination point for Fe(3+). Aspartate 311 contributes to the Zn(2+) binding site. Positions 313 and 315 each coordinate N-formimidoyl-L-glutamate. Threonine 316 is a binding site for 4-imidazolone-5-propanoate.

This sequence belongs to the metallo-dependent hydrolases superfamily. HutI family. The cofactor is Zn(2+). Fe(3+) serves as cofactor.

It is found in the cytoplasm. The enzyme catalyses 4-imidazolone-5-propanoate + H2O = N-formimidoyl-L-glutamate. It participates in amino-acid degradation; L-histidine degradation into L-glutamate; N-formimidoyl-L-glutamate from L-histidine: step 3/3. Its function is as follows. Catalyzes the hydrolytic cleavage of the carbon-nitrogen bond in imidazolone-5-propanoate to yield N-formimidoyl-L-glutamate. It is the third step in the universal histidine degradation pathway. This is Imidazolonepropionase from Pseudomonas paraeruginosa (strain DSM 24068 / PA7) (Pseudomonas aeruginosa (strain PA7)).